The primary structure comprises 364 residues: Aminomethyltransferase (364 aa).

The protein belongs to the GcvT family. In terms of assembly, the glycine cleavage system is composed of four proteins: P, T, L and H.

It catalyses the reaction N(6)-[(R)-S(8)-aminomethyldihydrolipoyl]-L-lysyl-[protein] + (6S)-5,6,7,8-tetrahydrofolate = N(6)-[(R)-dihydrolipoyl]-L-lysyl-[protein] + (6R)-5,10-methylene-5,6,7,8-tetrahydrofolate + NH4(+). The glycine cleavage system catalyzes the degradation of glycine. This is Aminomethyltransferase from Escherichia coli O6:H1 (strain CFT073 / ATCC 700928 / UPEC).